Reading from the N-terminus, the 492-residue chain is 3-octaprenyl-4-hydroxybenzoate carboxy-lyase (492 aa).

Asn-177 contributes to the Mn(2+) binding site. Residues Ile-180–Arg-182, Arg-194–Leu-196, and Arg-199–Gly-200 contribute to the prenylated FMN site. Glu-243 contributes to the Mn(2+) binding site. Asp-292 acts as the Proton donor in catalysis.

It belongs to the UbiD family. As to quaternary structure, homohexamer. The cofactor is prenylated FMN. Requires Mn(2+) as cofactor.

The protein localises to the cell membrane. It carries out the reaction a 4-hydroxy-3-(all-trans-polyprenyl)benzoate + H(+) = a 2-(all-trans-polyprenyl)phenol + CO2. It participates in cofactor biosynthesis; ubiquinone biosynthesis. Catalyzes the decarboxylation of 3-octaprenyl-4-hydroxy benzoate to 2-octaprenylphenol, an intermediate step in ubiquinone biosynthesis. The chain is 3-octaprenyl-4-hydroxybenzoate carboxy-lyase from Neisseria gonorrhoeae (strain ATCC 700825 / FA 1090).